Consider the following 1043-residue polypeptide: MTTTKRLKFENLRIQFSNAIVGNFLRLPHSIINVLESTNYAIQEFGIAVHSHNSDIPIVHLGWDGHDSGSSENVVLINPVLATVYDLNQKSPLVDLYIQRYDHTHLATEVYVTPETSDDWEIIDANAMRFQNGEILHQTRIVTPGETLICYLEGIVTKFKIDRVEPSMKSARITDGSLVVVAPKVNKTRLVKAEYGHSNKTILKNGAIQLLKKVILRSTVCKMDFPKDNLFVVYISDGAQLPSQKGYASIVKCSLRQSKKSDSDNKSVGIPSKKIGVFIKCDSQIPENHIALSSHLWDAFFTHPMNGAKIKLEFLQMNQANIISGRNATVNIKYFGKDVPTKSGDQYSKLLGGSLLTNNLILPTEQIIIEIKKGESEQQLCNLNEISNESVQWKVTQMGKEEVKDIIERHLPKHYHVKETGEVSRTSKDEDDFITVNSIKKEMVNYLTSPIIATPAIILDGKQGIGKTRLLKELINEVEKDHHIFVKYADCETLHETSNLDKTQKLIMEWCSFCYWYGPSLIVLDNVEALFGKPQANDGDPSNNGQWDNASKLLNFFINQVTKIFNKDNKRIRVLFSGKQKTQINPLLFDKHFVSETWSLRAPDKHARAKLLEYFFSKNQIMKLNRDLQFSDLSLETEGFSPLDLEIFTEKIFYDLQLERDCDNVVTRELFSKSLSAFTPSALRGVKLTKETNIKWGDIGALANAKDVLLETLEWPTKYEPIFVNCPLRLRSGILLYGYPGCGKTLLASAVAQQCGLNFISVKGPEILNKFIGASEQNIRELFERAQSVKPCILFFDEFDSIAPKRGHDSTGVTDRVVNQLLTQMDGAEGLDGVYILAATSRPDLIDSALLRPGRLDKSVICNIPTESERLDILQAIVNSKDKDTGQKKFALEKNADLKLIAEKTAGFSGADLQGLCYNAYLKSVHRWLSAADQSEVVPGNDNIEYFSINEHGRREENRLRLKTLLQQDVVHETKTSTSAASELTAVVTINDLLEACQETKPSISTSELVKLRGIYDRFQKDRNGEMPNGENSIDIGSRLSLM.

Residues 453 to 626 (ATPAIILDGK…SKNQIMKLNR (174 aa)) are AAA-cassette D1. Residues 461–468 (GKQGIGKT) and 738–745 (GYPGCGKT) contribute to the ATP site. The segment at 733–926 (GILLYGYPGC…CYNAYLKSVH (194 aa)) is AAA-cassette D2.

It belongs to the AAA ATPase family. In terms of assembly, interacts with PEX6; forming the PEX1-PEX6 AAA ATPase complex, which is composed of a heterohexamer formed by a trimer of PEX1-PEX6 dimers. The PEX1-PEX6 heterooligomers associate with the peroxisomal importomer via interaction of PEX6 with the peroxisomal membrane anchor PEX15.

The protein localises to the cytoplasm. It localises to the cytosol. The protein resides in the peroxisome membrane. The enzyme catalyses ATP + H2O = ADP + phosphate + H(+). In terms of biological role, component of the PEX1-PEX6 AAA ATPase complex, a protein dislocase complex that mediates the ATP-dependent extraction of the PEX5 receptor from peroxisomal membranes, an essential step for PEX5 recycling. Specifically recognizes PEX5 monoubiquitinated at 'Cys-6', and pulls it out of the peroxisome lumen through the PEX2-PEX10-PEX12 retrotranslocation channel. Extraction by the PEX1-PEX6 AAA ATPase complex is accompanied by unfolding of the TPR repeats and release of bound cargo from PEX5. In Saccharomyces cerevisiae (strain ATCC 204508 / S288c) (Baker's yeast), this protein is Peroxisomal ATPase PEX1.